Here is a 190-residue protein sequence, read N- to C-terminus: Molybdenum cofactor guanylyltransferase (190 aa).

Residues 10–12 (LAG), lysine 23, asparagine 51, aspartate 69, and aspartate 99 each bind GTP. Aspartate 99 contacts Mg(2+).

It belongs to the MobA family. In terms of assembly, monomer. It depends on Mg(2+) as a cofactor.

The protein localises to the cytoplasm. It catalyses the reaction Mo-molybdopterin + GTP + H(+) = Mo-molybdopterin guanine dinucleotide + diphosphate. Functionally, transfers a GMP moiety from GTP to Mo-molybdopterin (Mo-MPT) cofactor (Moco or molybdenum cofactor) to form Mo-molybdopterin guanine dinucleotide (Mo-MGD) cofactor. The sequence is that of Molybdenum cofactor guanylyltransferase from Mannheimia succiniciproducens (strain KCTC 0769BP / MBEL55E).